Here is a 208-residue protein sequence, read N- to C-terminus: Predicted GPI-anchored protein 37 (208 aa).

The first 18 residues, 1 to 18 (MLFTQLIILLTVTSQALS), serve as a signal peptide directing secretion. A disordered region spans residues 33 to 93 (TKRLGGGSRG…SSSSSGSRNW (61 aa)). Gly residues predominate over residues 36–53 (LGGGSRGGSSSGSRGGSS). The span at 54-63 (SGSSSGSSSG) shows a compositional bias: low complexity. The N-linked (GlcNAc...) asparagine glycan is linked to Asn173. Ser185 is lipidated: GPI-anchor amidated serine. Positions 186 to 208 (SSLNIPSTHFYLIGFAAAYSIVL) are cleaved as a propeptide — removed in mature form.

Belongs to the PGA37 family.

The protein localises to the cell membrane. Functionally, predicted GPI-anchored protein which may have a role during host infection. The sequence is that of Predicted GPI-anchored protein 37 (PGA37) from Candida albicans (strain SC5314 / ATCC MYA-2876) (Yeast).